The sequence spans 159 residues: Peptide deformylase (159 aa).

Positions 88 and 130 each coordinate Fe cation. Glutamate 131 is a catalytic residue. Residue histidine 134 coordinates Fe cation.

It belongs to the polypeptide deformylase family. Fe(2+) is required as a cofactor.

It carries out the reaction N-terminal N-formyl-L-methionyl-[peptide] + H2O = N-terminal L-methionyl-[peptide] + formate. Removes the formyl group from the N-terminal Met of newly synthesized proteins. Requires at least a dipeptide for an efficient rate of reaction. N-terminal L-methionine is a prerequisite for activity but the enzyme has broad specificity at other positions. The polypeptide is Peptide deformylase (Thermoanaerobacter pseudethanolicus (strain ATCC 33223 / 39E) (Clostridium thermohydrosulfuricum)).